Here is a 164-residue protein sequence, read N- to C-terminus: Lipoprotein signal peptidase (164 aa).

3 helical membrane passes run 12–32 (WLWL…LILQ), 70–90 (WFFA…MYRS), and 102–122 (ALII…GFVV). Catalysis depends on residues D123 and D141. Residues 137 to 157 (FNLADTAICVGAALIVLEGFL) traverse the membrane as a helical segment.

The protein belongs to the peptidase A8 family.

It localises to the cell inner membrane. It catalyses the reaction Release of signal peptides from bacterial membrane prolipoproteins. Hydrolyzes -Xaa-Yaa-Zaa-|-(S,diacylglyceryl)Cys-, in which Xaa is hydrophobic (preferably Leu), and Yaa (Ala or Ser) and Zaa (Gly or Ala) have small, neutral side chains.. The protein operates within protein modification; lipoprotein biosynthesis (signal peptide cleavage). In terms of biological role, this protein specifically catalyzes the removal of signal peptides from prolipoproteins. In Shigella flexneri, this protein is Lipoprotein signal peptidase.